The chain runs to 128 residues: Large ribosomal subunit protein bL17 (128 aa).

The protein belongs to the bacterial ribosomal protein bL17 family. As to quaternary structure, part of the 50S ribosomal subunit. Contacts protein L32.

This chain is Large ribosomal subunit protein bL17, found in Proteus mirabilis (strain HI4320).